A 131-amino-acid polypeptide reads, in one-letter code: Methylglyoxal synthase (131 aa).

One can recognise an MGS-like domain in the interval 1–131 (MKIALIAHDK…GDLDYRKLRK (131 aa)). Residues His-8, Lys-12, 34 to 37 (TGTT), and 54 to 55 (SG) contribute to the substrate site. Asp-60 acts as the Proton donor/acceptor in catalysis. His-87 lines the substrate pocket.

The protein belongs to the methylglyoxal synthase family.

The enzyme catalyses dihydroxyacetone phosphate = methylglyoxal + phosphate. In terms of biological role, catalyzes the formation of methylglyoxal from dihydroxyacetone phosphate. The protein is Methylglyoxal synthase of Bacillus cereus (strain ATCC 10987 / NRS 248).